The primary structure comprises 331 residues: Peroxisomal nicotinamide adenine dinucleotide carrier (331 aa).

3 Solcar repeats span residues 2–91 (SDAL…FRNR), 109–216 (VGMF…MLTK), and 229–320 (VTAL…LVKG). 6 helical membrane passes run 5-25 (LINGLAGAGGGIIAQLLTYPL), 63-85 (LYGGLAPSLAGTAASQGVYYYFY), 116-136 (LVAAFAGSVNVLMTNPIWVIV), 180-200 (VYDEAGITGFWKGVIPTLIMV), 235-255 (FLLGAVAKLGATVTTYPLLVV), and 293-313 (YKGMSTKIVQSVLAAAVLFMI).

It belongs to the mitochondrial carrier (TC 2.A.29) family. In terms of assembly, homodimer. In terms of tissue distribution, expressed in cotyledons, hypocotyls, vascular tissues, trichomes, hydathodes, seeds, pedicels, flowers and stigma.

It is found in the glyoxysome membrane. With respect to regulation, inhibited by pyridoxal 5'-phosphate, bathophenanthroline, tannic acid, mersalyl, mercuric chloride and bromocresol purple. In terms of biological role, mediates the NAD(+) import into peroxisomes. Favors the NAD(+)(in)/AMP(out) antiport exchange, but is also able to catalyze a low unidirectional transport that might be essential under special conditions. Transports CoA, dephospho-CoA, acetyl-CoA, adenosine 3',5'-diphosphate (PAP), NAD(+), AMP, ADP and NADH, but has no activity with ATP, GTP, GDP, NADPH, NADP(+) or FAD. Required for peroxisomes proliferation. This chain is Peroxisomal nicotinamide adenine dinucleotide carrier (PXN), found in Arabidopsis thaliana (Mouse-ear cress).